The primary structure comprises 441 residues: Arginine biosynthesis bifunctional protein ArgJ, mitochondrial (441 aa).

The N-terminal 8 residues, 1–8, are a transit peptide targeting the mitochondrion; it reads MRISSTLL. Positions 177, 204, 215, 301, 436, and 441 each coordinate substrate. Thr-215 acts as the Nucleophile in catalysis.

This sequence belongs to the ArgJ family. As to quaternary structure, heterodimer of an alpha and a beta chain. In terms of processing, the alpha and beta chains are autoproteolytically processed from a single precursor protein within the mitochondrion.

It is found in the mitochondrion matrix. The enzyme catalyses N(2)-acetyl-L-ornithine + L-glutamate = N-acetyl-L-glutamate + L-ornithine. It carries out the reaction L-glutamate + acetyl-CoA = N-acetyl-L-glutamate + CoA + H(+). It functions in the pathway amino-acid biosynthesis; L-arginine biosynthesis; L-ornithine and N-acetyl-L-glutamate from L-glutamate and N(2)-acetyl-L-ornithine (cyclic): step 1/1. The protein operates within amino-acid biosynthesis; L-arginine biosynthesis; N(2)-acetyl-L-ornithine from L-glutamate: step 1/4. In terms of biological role, catalyzes two activities which are involved in the cyclic version of arginine biosynthesis: the synthesis of acetylglutamate from glutamate and acetyl-CoA, and of ornithine by transacetylation between acetylornithine and glutamate. The protein is Arginine biosynthesis bifunctional protein ArgJ, mitochondrial of Saccharomyces cerevisiae (strain Lalvin EC1118 / Prise de mousse) (Baker's yeast).